The primary structure comprises 432 residues: Protein distal antenna-related (432 aa).

Residues 15–66 (TRGKRPLRNLTPNDKVRAIQRIHNGETKASVSRDLGVPESTLRGWCKNEQKL) enclose the HTH psq-type domain. A DNA-binding region (H-T-H motif) is located at residues 42 to 62 (KASVSRDLGVPESTLRGWCKN). 2 disordered regions span residues 195–221 (ESADTDIKSPQSTTDITDTAREENSTK) and 401–432 (SCASVSSRNNSRSQTPDKSTATSIACLSDGEQ). Composition is skewed to polar residues over residues 202–211 (KSPQSTTDIT) and 401–425 (SCASVSSRNNSRSQTPDKSTATSIA).

In terms of assembly, interacts with itself, dan, ey and dac to form a complex (or complexes) containing the RD factors.

It is found in the nucleus. Its function is as follows. Probable transcription factor with a role in the retinal determination (RD) network. Regulates ato expression and is required for normal R8 induction and differentiation. Danr appears to repress Dan expression, but Dan is required for Danr expression anterior to the morphogenetic furrow (MF). Dan and Danr lie downstream of so and require dac function for highest levels of expression. Contributes to differentiation of antenna-specific characteristics; effector gene that acts downstream of homothorax (hth), Distal-less (Dll), cut (ct) and spineless (ss) genes to control differentiation of distal antennal structures. The sequence is that of Protein distal antenna-related from Drosophila pseudoobscura pseudoobscura (Fruit fly).